Reading from the N-terminus, the 698-residue chain is Voltage-dependent calcium channel beta subunit-associated regulatory protein (698 aa).

Residues 1 to 41 (MQPTATMATAAATTATVALTTSWDNATSRPTAEPDPILDNY) are Extracellular-facing. Residue Asn25 is glycosylated (N-linked (GlcNAc...) asparagine). A helical; Signal-anchor for type III membrane protein membrane pass occupies residues 42 to 62 (VLLVVVMSLFVGGTLVVLSGV). At 63 to 698 (LLLCKRCWEV…APTSPDHSPA (636 aa)) the chain is on the cytoplasmic side. Disordered regions lie at residues 90 to 124 (YLDNGTHPIQDPDCRGEDPEGQDTETERFLATSST) and 185 to 275 (ASAA…SSGS). Residues 185–197 (ASAAATPHPATTS) are compositionally biased toward low complexity. Residues Ser290 and Ser295 each carry the phosphoserine modification. Disordered stretches follow at residues 308–339 (SQRASSLDTRGSPKRHHFQRQRAASESMEQEG), 360–421 (PPPR…HAQC), 438–536 (ATAS…RRDY), and 554–648 (PHFD…GSGL). A compositionally biased stretch (pro residues) spans 360–375 (PPPRPFLASPTSPPPT). A compositionally biased stretch (low complexity) spans 402-413 (PEHAQQQDPQQE). The span at 459-468 (SGSGSGGGGA) shows a compositional bias: gly residues. The segment covering 471-482 (AFPPPPESPPAL) has biased composition (pro residues). Residues 483-493 (RPKDGEARRLL) show a composition bias toward basic and acidic residues. Phosphoserine occurs at positions 501, 520, and 524. The span at 562 to 576 (HRTRAHPHTHARKQW) shows a compositional bias: basic residues. The residue at position 610 (Ser610) is a Phosphoserine. Thr691 is subject to Phosphothreonine. A phosphoserine mark is found at Ser692 and Ser696.

Interacts with voltage-dependent calcium channels CACNB1, CACNB2, CACNB3 and CACNB4 beta subunits; prevents their interaction with the CACNA1C alpha subunit thereby negatively regulating the activity of the corresponding calcium channels. As to expression, expressed by neurons in the cortex, cerebellum and hippocampus and by pancreatic beta cells (at protein level).

The protein localises to the cytoplasmic vesicle. The protein resides in the secretory vesicle. Its subcellular location is the synaptic vesicle membrane. It is found in the cell membrane. It localises to the cell projection. The protein localises to the growth cone. Functionally, negatively regulates voltage-gated calcium channels by preventing the interaction between their alpha and beta subunits. Thereby, negatively regulates calcium channels activity at the plasma membrane and indirectly inhibits calcium-regulated exocytosis. This is Voltage-dependent calcium channel beta subunit-associated regulatory protein from Mus musculus (Mouse).